The following is a 289-amino-acid chain: Aquaporin PIP1-2 (289 aa).

Residues 1-36 form a disordered region; it reads MEGKEEDVRLGANKFSERQPIGTAAQGAADDKDYKE. Helical transmembrane passes span 58-78 and 93-115; these read IAEF…VMGV and IAWS…SGGH. The short motif at 117–119 is the NPA 1 element; it reads NPA. A run of 3 helical transmembrane segments spans residues 136–156, 178–198, and 212–232; these read LFYI…VKGF, GDGL…VFSA, and ILAP…TIPI. Residues 238–240 carry the NPA 2 motif; it reads NPA. Residues 260–280 form a helical membrane-spanning segment; sequence IFWVGPFIGAALAAIYHQVII.

The protein belongs to the MIP/aquaporin (TC 1.A.8) family. PIP (TC 1.A.8.11) subfamily. In terms of assembly, interacts with PIP2-1 to form heteromers. As to expression, highly expressed in developing tassels and at lower levels in roots, shoots, ears and embryos. Expressed in the root growing zone at 5-6 mm from the root tip. Expressed in xylem parenchyma.

The protein resides in the cell membrane. Functionally, water channel required to facilitate the transport of water across cell membrane. Active as heteromers with PIP1-1, PIP2-1, PIP2-4 or PIP2-5, but not as homomers. This chain is Aquaporin PIP1-2 (PIP1-2), found in Zea mays (Maize).